A 347-amino-acid polypeptide reads, in one-letter code: Protein FAM50 homolog (347 aa).

Over residues 77–113 (EDIVREREKKLAQKKEEKDREKLKALEAKQAEKDRQR) the composition is skewed to basic and acidic residues. The tract at residues 77 to 142 (EDIVREREKK…EDEEEPLEIK (66 aa)) is disordered. The span at 123 to 138 (PEEDEESFDDEDEEEP) shows a compositional bias: acidic residues.

This sequence belongs to the FAM50 family.

The chain is Protein FAM50 homolog from Aedes aegypti (Yellowfever mosquito).